Reading from the N-terminus, the 314-residue chain is MGARGALLLALLLARAGLRKPESQEAAPLSGPCGRRVITSRIVGGEDAELGRWPWQGSLRLWDSHVCGVSLLSHRWALTAAHCFETYSDLSDPSGWMVQFGQLTSMPSFWSLQAYYTRYFVSNIYLSPRYLGNSPYDIALVKLSAPVTYTKHIQPICLQASTFEFENRTDCWVTGWGYIKEDEALPSPHTLQEVQVAIINNSMCNHLFLKYSFRKDIFGDMVCAGNAQGGKDACFGDSGGPLACNKNGLWYQIGVVSWGVGCGRPNRPGVYTNISHHFEWIQKLMAQSGMSQPDPSWPLLFFPLLWALPLLGPV.

The N-terminal stretch at 1–19 (MGARGALLLALLLARAGLR) is a signal peptide. Residues 20–41 (KPESQEAAPLSGPCGRRVITSR) constitute a propeptide that is removed on maturation. 2 cysteine pairs are disulfide-bonded: C33/C157 and C67/C83. Residues 42–286 (IVGGEDAELG…HFEWIQKLMA (245 aa)) form the Peptidase S1 domain. Active-site charge relay system residues include H82 and D137. Residues N167 and N200 are each glycosylated (N-linked (GlcNAc...) asparagine). Cystine bridges form between C171/C244, C204/C223, and C234/C262. S238 (charge relay system) is an active-site residue. N273 carries N-linked (GlcNAc...) asparagine glycosylation. The GPI-anchor amidated serine moiety is linked to residue S288. The propeptide at 289 to 314 (GMSQPDPSWPLLFFPLLWALPLLGPV) is removed in mature form.

Belongs to the peptidase S1 family. Expressed predominantly in premeiotic testicular germ cells, mostly late pachytene and diplotene spermatocytes.

It localises to the cell membrane. Its function is as follows. Could regulate proteolytic events associated with testicular germ cell maturation. The protein is Testisin (PRSS21) of Homo sapiens (Human).